Reading from the N-terminus, the 29-residue chain is Beta-theraphotoxin-Gr1a (29 aa).

3 disulfide bridges follow: Cys2/Cys16, Cys9/Cys21, and Cys15/Cys25.

Belongs to the neurotoxin 30 (phrixotoxin) family. As to expression, expressed by the venom gland.

It is found in the secreted. Inhibits voltage-gated sodium channels Nav1.1/SCN1A (IC(50)=630 nM), Nav1.2/SCN2A (IC(50)=230 nM), Nav1.3/SCN3A (IC(50)=770 nM), Nav1.4/SCN4A (IC(50)=1290 nM), Nav1.6/SCN8A (IC(50)=630 nM), Nav1.7/SCN9A (IC(50)=15.3-1000 nM) and potassium channels Kv11.1/KCNH2 (IC(50)=4.2 uM). The protein is Beta-theraphotoxin-Gr1a of Grammostola rosea (Chilean rose tarantula).